Reading from the N-terminus, the 474-residue chain is Trehalose-6-phosphate synthase (474 aa).

Residue arginine 10 coordinates D-glucose 6-phosphate. Position 22 to 23 (22 to 23 (GG)) interacts with UDP-alpha-D-glucose. D-glucose 6-phosphate-binding residues include tyrosine 77 and aspartate 131. Positions 263 and 268 each coordinate UDP-alpha-D-glucose. Position 301 (arginine 301) interacts with D-glucose 6-phosphate. Residues phenylalanine 340 and 366 to 370 (LVAKE) contribute to the UDP-alpha-D-glucose site.

It belongs to the glycosyltransferase 20 family. In terms of assembly, homotetramer.

The catalysed reaction is D-glucose 6-phosphate + UDP-alpha-D-glucose = alpha,alpha-trehalose 6-phosphate + UDP + H(+). It functions in the pathway glycan biosynthesis; trehalose biosynthesis. In terms of biological role, probably involved in the osmoprotection via the biosynthesis of trehalose. Catalyzes the transfer of glucose from UDP-alpha-D-glucose (UDP-Glc) to D-glucose 6-phosphate (Glc-6-P) to form trehalose-6-phosphate. Acts with retention of the anomeric configuration of the UDP-sugar donor. The protein is Trehalose-6-phosphate synthase of Klebsiella pneumoniae subsp. pneumoniae (strain ATCC 700721 / MGH 78578).